The primary structure comprises 346 residues: N-acetyl-gamma-glutamyl-phosphate reductase (346 aa).

Residue Cys151 is part of the active site.

This sequence belongs to the NAGSA dehydrogenase family. Type 1 subfamily.

The protein resides in the cytoplasm. It carries out the reaction N-acetyl-L-glutamate 5-semialdehyde + phosphate + NADP(+) = N-acetyl-L-glutamyl 5-phosphate + NADPH + H(+). It participates in amino-acid biosynthesis; L-arginine biosynthesis; N(2)-acetyl-L-ornithine from L-glutamate: step 3/4. Its function is as follows. Catalyzes the NADPH-dependent reduction of N-acetyl-5-glutamyl phosphate to yield N-acetyl-L-glutamate 5-semialdehyde. This Ehrlichia chaffeensis (strain ATCC CRL-10679 / Arkansas) protein is N-acetyl-gamma-glutamyl-phosphate reductase.